The sequence spans 290 residues: MGLCKCPKRQVTTQFCFEHRVNVCENCMVVNHTKCTVQSYIQWLKDSDFDSSCPLCGSPLDNEDCVRLICYHVFHWKCLNAKQQSLPANTAPGGHTCPTCSDPIFPPVNLVSPVADVLRTRLGQVNWARNVLELPLLSEDKPDYYTTATTSAGVHNGNTFASSMSQTRSNERPESPHSIVNMESYVSNASPALDFHASSRRPLLARESPIGASDRDDNKYKRRTPQEIFSRWSRRLYAPSSKPPWRRTWFLVLGGCIGFVCIIYVLATLGRRGGDGEVGLIYNRNLPHEE.

The segment at 1-43 (MGLCKCPKRQVTTQFCFEHRVNVCENCMVVNHTKCTVQSYIQW) adopts a B box-type; degenerate zinc-finger fold. The RING-type; atypical zinc finger occupies 53–101 (CPLCGSPLDNEDCVRLICYHVFHWKCLNAKQQSLPANTAPGGHTCPTCS). The segment covering 156 to 168 (NGNTFASSMSQTR) has biased composition (polar residues). Residues 156-175 (NGNTFASSMSQTRSNERPES) form a disordered region. The chain crosses the membrane as a helical span at residues 249-269 (WFLVLGGCIGFVCIIYVLATL).

It belongs to the ZFPL1 family.

It localises to the membrane. The protein is Zinc finger protein-like 1 homolog of Aedes aegypti (Yellowfever mosquito).